We begin with the raw amino-acid sequence, 372 residues long: Ketol-acid reductoisomerase (NADP(+)) (372 aa).

Residues 1 to 25 (MTETKTQTETETDEEEGTDTDTALD) are disordered. Positions 10–19 (TETDEEEGTD) are enriched in acidic residues. In terms of domain architecture, KARI N-terminal Rossmann spans 24–205 (LDTTIYYDDD…GCTRAGAIET (182 aa)). NADP(+) contacts are provided by residues 49–52 (YGSQ), S75, S77, and 107–110 (DTVQ). H131 is an active-site residue. G157 is a binding site for NADP(+). The 146-residue stretch at 206–351 (TFREETETDL…EPLRDLFAWS (146 aa)) folds into the KARI C-terminal knotted domain. Residues D214, E218, E250, and E254 each coordinate Mg(2+). A substrate-binding site is contributed by S275. The disordered stretch occupies residues 351 to 372 (SDNEETNDESDVVSEPEAAADD). A compositionally biased stretch (acidic residues) spans 352-372 (DNEETNDESDVVSEPEAAADD).

This sequence belongs to the ketol-acid reductoisomerase family. Mg(2+) is required as a cofactor.

It catalyses the reaction (2R)-2,3-dihydroxy-3-methylbutanoate + NADP(+) = (2S)-2-acetolactate + NADPH + H(+). The catalysed reaction is (2R,3R)-2,3-dihydroxy-3-methylpentanoate + NADP(+) = (S)-2-ethyl-2-hydroxy-3-oxobutanoate + NADPH + H(+). Its pathway is amino-acid biosynthesis; L-isoleucine biosynthesis; L-isoleucine from 2-oxobutanoate: step 2/4. It participates in amino-acid biosynthesis; L-valine biosynthesis; L-valine from pyruvate: step 2/4. Involved in the biosynthesis of branched-chain amino acids (BCAA). Catalyzes an alkyl-migration followed by a ketol-acid reduction of (S)-2-acetolactate (S2AL) to yield (R)-2,3-dihydroxy-isovalerate. In the isomerase reaction, S2AL is rearranged via a Mg-dependent methyl migration to produce 3-hydroxy-3-methyl-2-ketobutyrate (HMKB). In the reductase reaction, this 2-ketoacid undergoes a metal-dependent reduction by NADPH to yield (R)-2,3-dihydroxy-isovalerate. This Haloquadratum walsbyi (strain DSM 16790 / HBSQ001) protein is Ketol-acid reductoisomerase (NADP(+)).